The primary structure comprises 186 residues: MSLLTIHPESGTSAPEIIREGDAIAARLAEIGVLFERWQAGRAFEPDAEQQTILAAYADSVERLKAKYGFESADVISVGPDHPQKDELRARFLREHTHSDFEVRFFVEGRGLFYLHPGDRVYAILCERGDLLSVPSNTRHWFDMGAEPCLKCIRLFTTAEGWVADFTGSDIGDRFPRLEDYLKHYA.

Fe(2+) contacts are provided by H96, H98, E102, and H140. Ni(2+) is bound by residues H96, H98, E102, and H140.

It belongs to the acireductone dioxygenase (ARD) family. As to quaternary structure, monomer. Fe(2+) is required as a cofactor. The cofactor is Ni(2+).

The catalysed reaction is 1,2-dihydroxy-5-(methylsulfanyl)pent-1-en-3-one + O2 = 3-(methylsulfanyl)propanoate + CO + formate + 2 H(+). It carries out the reaction 1,2-dihydroxy-5-(methylsulfanyl)pent-1-en-3-one + O2 = 4-methylsulfanyl-2-oxobutanoate + formate + 2 H(+). It functions in the pathway amino-acid biosynthesis; L-methionine biosynthesis via salvage pathway; L-methionine from S-methyl-5-thio-alpha-D-ribose 1-phosphate: step 5/6. Catalyzes 2 different reactions between oxygen and the acireductone 1,2-dihydroxy-3-keto-5-methylthiopentene (DHK-MTPene) depending upon the metal bound in the active site. Fe-containing acireductone dioxygenase (Fe-ARD) produces formate and 2-keto-4-methylthiobutyrate (KMTB), the alpha-ketoacid precursor of methionine in the methionine recycle pathway. Ni-containing acireductone dioxygenase (Ni-ARD) produces methylthiopropionate, carbon monoxide and formate, and does not lie on the methionine recycle pathway. The polypeptide is Acireductone dioxygenase (Methylococcus capsulatus (strain ATCC 33009 / NCIMB 11132 / Bath)).